The sequence spans 1342 residues: DNA-directed RNA polymerase subunit beta (1342 aa).

It belongs to the RNA polymerase beta chain family. In terms of assembly, the RNAP catalytic core consists of 2 alpha, 1 beta, 1 beta' and 1 omega subunit. When a sigma factor is associated with the core the holoenzyme is formed, which can initiate transcription.

It carries out the reaction RNA(n) + a ribonucleoside 5'-triphosphate = RNA(n+1) + diphosphate. Functionally, DNA-dependent RNA polymerase catalyzes the transcription of DNA into RNA using the four ribonucleoside triphosphates as substrates. The protein is DNA-directed RNA polymerase subunit beta of Salmonella agona (strain SL483).